A 209-amino-acid polypeptide reads, in one-letter code: V-type ATP synthase subunit D 2 (209 aa).

It belongs to the V-ATPase D subunit family.

Its function is as follows. Produces ATP from ADP in the presence of a proton gradient across the membrane. The protein is V-type ATP synthase subunit D 2 (atpD2) of Treponema pallidum (strain Nichols).